A 155-amino-acid polypeptide reads, in one-letter code: Ribonuclease H (155 aa).

One can recognise an RNase H type-1 domain in the interval 5–146 (LAEVVEIFTD…ADMLANRGVQ (142 aa)). The Mg(2+) site is built by D14, E52, D74, and D138.

It belongs to the RNase H family. In terms of assembly, monomer. Mg(2+) serves as cofactor.

The protein localises to the cytoplasm. The catalysed reaction is Endonucleolytic cleavage to 5'-phosphomonoester.. Its function is as follows. Endonuclease that specifically degrades the RNA of RNA-DNA hybrids. This chain is Ribonuclease H, found in Nitrosospira multiformis (strain ATCC 25196 / NCIMB 11849 / C 71).